The following is a 201-amino-acid chain: 3-isopropylmalate dehydratase small subunit (201 aa).

The protein belongs to the LeuD family. LeuD type 1 subfamily. Heterodimer of LeuC and LeuD.

It catalyses the reaction (2R,3S)-3-isopropylmalate = (2S)-2-isopropylmalate. The protein operates within amino-acid biosynthesis; L-leucine biosynthesis; L-leucine from 3-methyl-2-oxobutanoate: step 2/4. In terms of biological role, catalyzes the isomerization between 2-isopropylmalate and 3-isopropylmalate, via the formation of 2-isopropylmaleate. The chain is 3-isopropylmalate dehydratase small subunit from Sinorhizobium medicae (strain WSM419) (Ensifer medicae).